A 66-amino-acid polypeptide reads, in one-letter code: Cold shock protein CspB (66 aa).

Residues 4 to 63 (GKVKWFNNEKGYGFIEVEGGSDVFVHFTAIQGEGFKSLEEGQEVSFEIVQGNRGPQAANV) enclose the CSD domain.

In terms of assembly, homodimer.

The protein localises to the cytoplasm. Its function is as follows. Affects cell viability at low temperatures. In Geobacillus stearothermophilus (Bacillus stearothermophilus), this protein is Cold shock protein CspB (cspB).